Consider the following 164-residue polypeptide: Crossover junction endodeoxyribonuclease RuvC (164 aa).

Active-site residues include D7, E67, and D140. Mg(2+) contacts are provided by D7, E67, and D140.

This sequence belongs to the RuvC family. As to quaternary structure, homodimer which binds Holliday junction (HJ) DNA. The HJ becomes 2-fold symmetrical on binding to RuvC with unstacked arms; it has a different conformation from HJ DNA in complex with RuvA. In the full resolvosome a probable DNA-RuvA(4)-RuvB(12)-RuvC(2) complex forms which resolves the HJ. Requires Mg(2+) as cofactor.

It is found in the cytoplasm. It catalyses the reaction Endonucleolytic cleavage at a junction such as a reciprocal single-stranded crossover between two homologous DNA duplexes (Holliday junction).. Functionally, the RuvA-RuvB-RuvC complex processes Holliday junction (HJ) DNA during genetic recombination and DNA repair. Endonuclease that resolves HJ intermediates. Cleaves cruciform DNA by making single-stranded nicks across the HJ at symmetrical positions within the homologous arms, yielding a 5'-phosphate and a 3'-hydroxyl group; requires a central core of homology in the junction. The consensus cleavage sequence is 5'-(A/T)TT(C/G)-3'. Cleavage occurs on the 3'-side of the TT dinucleotide at the point of strand exchange. HJ branch migration catalyzed by RuvA-RuvB allows RuvC to scan DNA until it finds its consensus sequence, where it cleaves and resolves the cruciform DNA. This chain is Crossover junction endodeoxyribonuclease RuvC, found in Pelotomaculum thermopropionicum (strain DSM 13744 / JCM 10971 / SI).